Reading from the N-terminus, the 506-residue chain is Glutamate--tRNA ligase (506 aa).

The 'HIGH' region motif lies at 24-34; sequence PSPTGLQHIGG. C121, C123, C148, and H150 together coordinate Zn(2+). The short motif at 266–270 is the 'KMSKS' region element; sequence KLSKR. K269 is an ATP binding site.

Belongs to the class-I aminoacyl-tRNA synthetase family. Glutamate--tRNA ligase type 1 subfamily. As to quaternary structure, monomer. Zn(2+) is required as a cofactor.

It localises to the cytoplasm. It carries out the reaction tRNA(Glu) + L-glutamate + ATP = L-glutamyl-tRNA(Glu) + AMP + diphosphate. Its function is as follows. Catalyzes the attachment of glutamate to tRNA(Glu) in a two-step reaction: glutamate is first activated by ATP to form Glu-AMP and then transferred to the acceptor end of tRNA(Glu). This Borrelia duttonii (strain Ly) protein is Glutamate--tRNA ligase.